A 387-amino-acid chain; its full sequence is 1-deoxy-D-xylulose 5-phosphate reductoisomerase (387 aa).

NADPH-binding residues include threonine 10, glycine 11, serine 12, isoleucine 13, glycine 36, arginine 37, and asparagine 124. Lysine 125 is a 1-deoxy-D-xylulose 5-phosphate binding site. Residue glutamate 126 coordinates NADPH. Aspartate 150 is a binding site for Mn(2+). 4 residues coordinate 1-deoxy-D-xylulose 5-phosphate: serine 151, glutamate 152, serine 176, and histidine 199. Glutamate 152 is a Mn(2+) binding site. Residue glycine 205 coordinates NADPH. 1-deoxy-D-xylulose 5-phosphate contacts are provided by serine 212, asparagine 217, lysine 218, and glutamate 221. Glutamate 221 is a Mn(2+) binding site.

This sequence belongs to the DXR family. Mg(2+) is required as a cofactor. Mn(2+) serves as cofactor.

It catalyses the reaction 2-C-methyl-D-erythritol 4-phosphate + NADP(+) = 1-deoxy-D-xylulose 5-phosphate + NADPH + H(+). It participates in isoprenoid biosynthesis; isopentenyl diphosphate biosynthesis via DXP pathway; isopentenyl diphosphate from 1-deoxy-D-xylulose 5-phosphate: step 1/6. Functionally, catalyzes the NADPH-dependent rearrangement and reduction of 1-deoxy-D-xylulose-5-phosphate (DXP) to 2-C-methyl-D-erythritol 4-phosphate (MEP). The polypeptide is 1-deoxy-D-xylulose 5-phosphate reductoisomerase (Cyanothece sp. (strain PCC 7425 / ATCC 29141)).